Here is a 398-residue protein sequence, read N- to C-terminus: Phosphoglycerate kinase (398 aa).

Residues 21-23 (DFN), Arg36, 59-62 (HLGR), Arg119, and Arg157 contribute to the substrate site. Residues Lys208, Gly296, Glu327, and 354–357 (GGDS) contribute to the ATP site.

This sequence belongs to the phosphoglycerate kinase family. In terms of assembly, monomer.

The protein localises to the cytoplasm. It carries out the reaction (2R)-3-phosphoglycerate + ATP = (2R)-3-phospho-glyceroyl phosphate + ADP. Its pathway is carbohydrate degradation; glycolysis; pyruvate from D-glyceraldehyde 3-phosphate: step 2/5. The chain is Phosphoglycerate kinase from Lactococcus lactis subsp. cremoris (strain MG1363).